The chain runs to 153 residues: Movement protein (153 aa).

2 disordered regions span residues 1–24 (MAQEGGAVEQFGQWLWSNPIEQDP) and 121–153 (PWVATLIPSQSAGPPQRSSEPKRLTGRNSRNQR). Over residues 121–138 (PWVATLIPSQSAGPPQRS) the composition is skewed to polar residues.

It belongs to the luteoviruses movement protein family.

Its function is as follows. Transports viral genome to neighboring plant cells directly through plasmosdesmata, without any budding. The movement protein allows efficient cell to cell propagation, by bypassing the host cell wall barrier. The chain is Movement protein from Avena byzantina (Oat).